We begin with the raw amino-acid sequence, 461 residues long: Protein ultraspiracle homolog (461 aa).

The tract at residues Met1–Leu112 is modulating. A disordered region spans residues Pro26–Thr51. The span at Ala27–Ser40 shows a compositional bias: low complexity. Positions Asn41–Thr51 are enriched in polar residues. 2 NR C4-type zinc fingers span residues Cys113–Cys133 and Cys149–Cys173. The segment at residues Cys113 to Glu185 is a DNA-binding region (nuclear receptor). Residues Glu185–Arg192 are hinge. The NR LBD domain maps to Val203–His452.

The protein belongs to the nuclear hormone receptor family. NR2 subfamily. Heterodimer of USP and ECR. Only the heterodimer is capable of high-affinity binding to ecdysone.

It localises to the nucleus. Its function is as follows. Receptor for ecdysone. May be an important modulator of insect metamorphosis. The protein is Protein ultraspiracle homolog (USP) of Manduca sexta (Tobacco hawkmoth).